Here is a 454-residue protein sequence, read N- to C-terminus: UDP-N-acetylmuramoylalanine--D-glutamate ligase (454 aa).

114-120 (GTNGKTT) is an ATP binding site.

Belongs to the MurCDEF family.

The protein resides in the cytoplasm. It carries out the reaction UDP-N-acetyl-alpha-D-muramoyl-L-alanine + D-glutamate + ATP = UDP-N-acetyl-alpha-D-muramoyl-L-alanyl-D-glutamate + ADP + phosphate + H(+). The protein operates within cell wall biogenesis; peptidoglycan biosynthesis. Its function is as follows. Cell wall formation. Catalyzes the addition of glutamate to the nucleotide precursor UDP-N-acetylmuramoyl-L-alanine (UMA). The protein is UDP-N-acetylmuramoylalanine--D-glutamate ligase of Desulfitobacterium hafniense (strain Y51).